Reading from the N-terminus, the 510-residue chain is MSKKPVALIILDGFAMRDEAKGNAVAQANKPNFDRYWNQYPHALLKADGEAVGLPEGQMGNSEVGHLNIGAGRIVYQSLTRVNLSIREGEFFENETFLNAMNHVKEKGSSLHIYGLVSDGGIHSHINHLYALLELAKREQVERVYIHGFLDGRDVGPTSAESYLVDLEAKMKELGVGELATLHGRYYAMDRDKRWDRVEKSYRAMVYGEGPAYSSALDVIKDSYENSIHDEFVIPSVITNEDGSPVATIEDDDAIIFFNFRPDRAIQMSQVFTNKDFRGFDRGEKLPQNVYYVCLTHFSETVQGDVAFKPTNLDNTLGEVLAQQNYKQLRIAETEKYPHVTFFFSGGREEPFPGEERILIDSPKVATYDLKPEMSAYEVTDALLNEIEADKHDVIILNFANPDMVGHSGMLEPTIKAVEAVDECLGKVVDAILAKGGAAVITADHGNADEVVTLEGKPMTAHTTNKVPVIVTEEGLNLREDGILADLSPTVLDLLGGKQPAEMTGKTLIK.

Asp12 contacts Mn(2+). The residue at position 36 (Tyr36) is a Phosphotyrosine. Ser62 serves as a coordination point for Mn(2+). The active-site Phosphoserine intermediate is Ser62. Residues His123, 153-154 (RD), Arg185, Arg191, 261-264 (RPDR), and Lys336 each bind substrate. Positions 403, 407, 444, 445, and 462 each coordinate Mn(2+).

It belongs to the BPG-independent phosphoglycerate mutase family. As to quaternary structure, monomer. The cofactor is Mn(2+).

The catalysed reaction is (2R)-2-phosphoglycerate = (2R)-3-phosphoglycerate. The protein operates within carbohydrate degradation; glycolysis; pyruvate from D-glyceraldehyde 3-phosphate: step 3/5. In terms of biological role, essential for rapid growth and for sporulation. Catalyzes the interconversion of 2-phosphoglycerate and 3-phosphoglycerate. The sequence is that of 2,3-bisphosphoglycerate-independent phosphoglycerate mutase from Halalkalibacterium halodurans (strain ATCC BAA-125 / DSM 18197 / FERM 7344 / JCM 9153 / C-125) (Bacillus halodurans).